The chain runs to 287 residues: Bifunctional protein FolD (287 aa).

Residues 171-173 (GHS), Ile-196, and Ile-237 each bind NADP(+).

The protein belongs to the tetrahydrofolate dehydrogenase/cyclohydrolase family. As to quaternary structure, homodimer.

It carries out the reaction (6R)-5,10-methylene-5,6,7,8-tetrahydrofolate + NADP(+) = (6R)-5,10-methenyltetrahydrofolate + NADPH. The catalysed reaction is (6R)-5,10-methenyltetrahydrofolate + H2O = (6R)-10-formyltetrahydrofolate + H(+). The protein operates within one-carbon metabolism; tetrahydrofolate interconversion. In terms of biological role, catalyzes the oxidation of 5,10-methylenetetrahydrofolate to 5,10-methenyltetrahydrofolate and then the hydrolysis of 5,10-methenyltetrahydrofolate to 10-formyltetrahydrofolate. This is Bifunctional protein FolD from Methanosarcina mazei (strain ATCC BAA-159 / DSM 3647 / Goe1 / Go1 / JCM 11833 / OCM 88) (Methanosarcina frisia).